Reading from the N-terminus, the 44-residue chain is Hyaluronidase CdtHya1 (44 aa).

The protein belongs to the glycosyl hydrolase 56 family. As to quaternary structure, monomer. In terms of processing, contains disulfide bonds. Post-translationally, glycosylated. As to expression, expressed by the venom gland.

It is found in the secreted. It carries out the reaction Random hydrolysis of (1-&gt;4)-linkages between N-acetyl-beta-D-glucosamine and D-glucuronate residues in hyaluronate.. Its function is as follows. Snake venom endo-hyaluronidase that degrades hyaluronan to smaller oligosaccharide fragments. In venom, it is not toxic by itself, but increases the diffusion of other venom proteins such as crotoxin (a neurotoxic and myotoxic PLA2) by degrading the extracellular matrix. In addition, it displays antiedematogenic activity, since it significantly diminishes the oedematogenic activity of crotoxin (probably by direct substrate hydrolysis, since hyaluronan possesses strong water-binding capacity). This Crotalus durissus terrificus (South American rattlesnake) protein is Hyaluronidase CdtHya1.